The sequence spans 117 residues: Large ribosomal subunit protein bL20c (117 aa).

It belongs to the bacterial ribosomal protein bL20 family.

The protein resides in the plastid. Its subcellular location is the chloroplast. Binds directly to 23S ribosomal RNA and is necessary for the in vitro assembly process of the 50S ribosomal subunit. It is not involved in the protein synthesizing functions of that subunit. The protein is Large ribosomal subunit protein bL20c of Aethionema grandiflorum (Persian stone-cress).